Consider the following 262-residue polypeptide: DNA repair protein RecO (262 aa).

This sequence belongs to the RecO family.

Involved in DNA repair and RecF pathway recombination. The protein is DNA repair protein RecO of Acidovorax ebreus (strain TPSY) (Diaphorobacter sp. (strain TPSY)).